A 366-amino-acid chain; its full sequence is Sec-independent protein translocase protein TatC (366 aa).

7 helical membrane-spanning segments follow: residues 42–62, 70–90, 97–117, 134–154, 179–199, 207–227, and 230–250; these read VLAVLVLFLILFPFRNELFTM, HMPAGSTMIAVEVASPFFIPL, AVFIAIPFLLYQLWAFIAPGL, ILFYLGAAFAYFVVFPVVFGF, LFFAFGFVFEVPVAIVLLVIV, LAGFRRYAILIAFIIAAILTP, and VLSQFMMALPIIMLYEFGLFV. Positions 266 to 279 are enriched in acidic residues; that stretch reads EAEESGAADDESDE. Residues 266–366 are disordered; it reads EAEESGAADD…PSPKKPDSPV (101 aa). Basic and acidic residues-rich tracts occupy residues 281-290 and 301-318; these read VSARHAEYEA and DMDKAFDEAEADQRRLES. Residues 319 to 333 show a composition bias toward polar residues; the sequence is DSSASDDGPESNTAG.

This sequence belongs to the TatC family. The Tat system comprises two distinct complexes: a TatABC complex, containing multiple copies of TatA, TatB and TatC subunits, and a separate TatA complex, containing only TatA subunits. Substrates initially bind to the TatABC complex, which probably triggers association of the separate TatA complex to form the active translocon.

It is found in the cell inner membrane. In terms of biological role, part of the twin-arginine translocation (Tat) system that transports large folded proteins containing a characteristic twin-arginine motif in their signal peptide across membranes. Together with TatB, TatC is part of a receptor directly interacting with Tat signal peptides. The polypeptide is Sec-independent protein translocase protein TatC (Halothiobacillus neapolitanus (strain ATCC 23641 / c2) (Thiobacillus neapolitanus)).